A 197-amino-acid chain; its full sequence is Casparian strip membrane protein 5 (197 aa).

The Cytoplasmic portion of the chain corresponds to 1–34 (MSTTIDMPGSSKAAKAGKPVLVTTPSRPGGWKKG). A helical membrane pass occupies residues 35–55 (VAIMDFILRLGAIAAALGAAA). Topologically, residues 56-84 (TMGLSDQTLPFFTQFFQFEASYDSFTTFQ) are extracellular. The chain crosses the membrane as a helical span at residues 85-105 (FFVITMALVAGYLVLSLPLSI). Residues 106 to 117 (VAVVRPHAAGPR) are Cytoplasmic-facing. The helical transmembrane segment at 118–138 (LFLIILDTVFLTLATASGASA) threads the bilayer. Topologically, residues 139-171 (ASIVYLAHNGNQDTNWIAICNQFGDFCAQTSGA) are extracellular. The chain crosses the membrane as a helical span at residues 172–192 (VVSSLVAVLVFVLLIVMSALV). Residues 193-197 (LGKKH) lie on the Cytoplasmic side of the membrane.

It belongs to the Casparian strip membrane proteins (CASP) family. Homodimer and heterodimers.

Its subcellular location is the cell membrane. Its function is as follows. Regulates membrane-cell wall junctions and localized cell wall deposition. Required for establishment of the Casparian strip membrane domain (CSD) and the subsequent formation of Casparian strips, a cell wall modification of the root endodermis that determines an apoplastic barrier between the intraorganismal apoplasm and the extraorganismal apoplasm and prevents lateral diffusion. This Lotus japonicus (Lotus corniculatus var. japonicus) protein is Casparian strip membrane protein 5.